The following is a 481-amino-acid chain: UDP-glycosyltransferase 88F3 (481 aa).

UDP-alpha-D-glucose is bound by residues serine 288, 357 to 358 (WA), 375 to 383 (HCGWNSVLE), and 397 to 400 (YAEQ).

This sequence belongs to the UDP-glycosyltransferase family.

Its function is as follows. Glycosyltransferase that may possess chalcone and dihydrochalcone 2'-O-glucosyltransferase activity. This Pyrus communis (Pear) protein is UDP-glycosyltransferase 88F3.